The following is a 318-amino-acid chain: Carbamate kinase (318 aa).

The protein belongs to the carbamate kinase family.

It localises to the cytoplasm. It catalyses the reaction hydrogencarbonate + NH4(+) + ATP = carbamoyl phosphate + ADP + H2O + H(+). Its pathway is metabolic intermediate metabolism; carbamoyl phosphate degradation; CO(2) and NH(3) from carbamoyl phosphate: step 1/1. The chain is Carbamate kinase (arcC) from Lentilactobacillus hilgardii (Lactobacillus hilgardii).